Consider the following 421-residue polypeptide: Nuclear speckle RNA-binding protein B (421 aa).

Disordered regions lie at residues 1-64, 86-114, and 197-226; these read MDNR…VNIY, TGQTSTSTTSSSSSSSTSEPKDTSTMVDT, and TDPQEGTPYLIPSGDMHSYLSQDEDRGIPH. Residues 33–44 are compositionally biased toward pro residues; it reads PLAPPHPQPQPP. Positions 89 to 103 are enriched in low complexity; the sequence is TSTSTTSSSSSSSTS. The RRM domain occupies 323-409; that stretch reads NTLYVEGLPS…KILRLQFFRN (87 aa).

As to expression, isoform 1: Expressed in root meristems, lateral root primordia, root vascular tissues and cotyledon vascular tissues. Isoform 2: Expressed in root meristems, lateral root primordia and root vascular tissues.

Its subcellular location is the nucleus speckle. Functionally, alternative splicing (AS) regulator that binds to specific mRNAs and modulates auxin effects on the transcriptome. Displaced from its targets upon binding to AS competitor long non-coding RNA (ASCO-RNA). This chain is Nuclear speckle RNA-binding protein B, found in Arabidopsis thaliana (Mouse-ear cress).